The primary structure comprises 432 residues: Glutamate-1-semialdehyde 2,1-aminomutase 1 (432 aa).

Lys-268 bears the N6-(pyridoxal phosphate)lysine mark.

It belongs to the class-III pyridoxal-phosphate-dependent aminotransferase family. HemL subfamily. Homodimer. It depends on pyridoxal 5'-phosphate as a cofactor.

It is found in the cytoplasm. The catalysed reaction is (S)-4-amino-5-oxopentanoate = 5-aminolevulinate. The protein operates within porphyrin-containing compound metabolism; protoporphyrin-IX biosynthesis; 5-aminolevulinate from L-glutamyl-tRNA(Glu): step 2/2. The sequence is that of Glutamate-1-semialdehyde 2,1-aminomutase 1 from Bacillus licheniformis (strain ATCC 14580 / DSM 13 / JCM 2505 / CCUG 7422 / NBRC 12200 / NCIMB 9375 / NCTC 10341 / NRRL NRS-1264 / Gibson 46).